Reading from the N-terminus, the 251-residue chain is Zinc import ATP-binding protein ZnuC (251 aa).

The region spanning 5–220 (VSLENVSVSF…PEFISMFGPR (216 aa)) is the ABC transporter domain. 37 to 44 (GPNGAGKS) contacts ATP.

The protein belongs to the ABC transporter superfamily. Zinc importer (TC 3.A.1.15.5) family. The complex is composed of two ATP-binding proteins (ZnuC), two transmembrane proteins (ZnuB) and a solute-binding protein (ZnuA).

Its subcellular location is the cell inner membrane. The catalysed reaction is Zn(2+)(out) + ATP(in) + H2O(in) = Zn(2+)(in) + ADP(in) + phosphate(in) + H(+)(in). In terms of biological role, part of the ABC transporter complex ZnuABC involved in zinc import. Responsible for energy coupling to the transport system. Seems to be important for the virulence. This Salmonella typhimurium (strain LT2 / SGSC1412 / ATCC 700720) protein is Zinc import ATP-binding protein ZnuC.